The sequence spans 378 residues: UDP-N-acetylglucosamine--N-acetylmuramyl-(pentapeptide) pyrophosphoryl-undecaprenol N-acetylglucosamine transferase (378 aa).

UDP-N-acetyl-alpha-D-glucosamine-binding positions include 14 to 16 (TGG), asparagine 125, arginine 165, serine 193, and glutamine 293.

The protein belongs to the glycosyltransferase 28 family. MurG subfamily.

The protein resides in the cell inner membrane. It carries out the reaction di-trans,octa-cis-undecaprenyl diphospho-N-acetyl-alpha-D-muramoyl-L-alanyl-D-glutamyl-meso-2,6-diaminopimeloyl-D-alanyl-D-alanine + UDP-N-acetyl-alpha-D-glucosamine = di-trans,octa-cis-undecaprenyl diphospho-[N-acetyl-alpha-D-glucosaminyl-(1-&gt;4)]-N-acetyl-alpha-D-muramoyl-L-alanyl-D-glutamyl-meso-2,6-diaminopimeloyl-D-alanyl-D-alanine + UDP + H(+). It participates in cell wall biogenesis; peptidoglycan biosynthesis. In terms of biological role, cell wall formation. Catalyzes the transfer of a GlcNAc subunit on undecaprenyl-pyrophosphoryl-MurNAc-pentapeptide (lipid intermediate I) to form undecaprenyl-pyrophosphoryl-MurNAc-(pentapeptide)GlcNAc (lipid intermediate II). The chain is UDP-N-acetylglucosamine--N-acetylmuramyl-(pentapeptide) pyrophosphoryl-undecaprenol N-acetylglucosamine transferase from Bartonella bacilliformis (strain ATCC 35685 / KC583 / Herrer 020/F12,63).